The following is a 122-amino-acid chain: Large ribosomal subunit protein uL14c (122 aa).

This sequence belongs to the universal ribosomal protein uL14 family. In terms of assembly, part of the 50S ribosomal subunit.

It is found in the plastid. Its subcellular location is the chloroplast. Binds to 23S rRNA. The protein is Large ribosomal subunit protein uL14c of Carica papaya (Papaya).